Here is a 317-residue protein sequence, read N- to C-terminus: Prenyl transferase paxC (317 aa).

Substrate contacts are provided by Lys-53 and His-86. Residues Asp-93 and Asp-97 each coordinate Mg(2+). Positions 102, 186, 187, 216, 223, and 233 each coordinate substrate.

This sequence belongs to the FPP/GGPP synthase family.

It participates in secondary metabolite biosynthesis. Prenyl transferase; part of the gene cluster that mediates the biosynthesis of paxalline, a mycotoxin that acts as an inhibitor of mammalian maxi-K channels. PaxG, the geranylgeranyl diphosphate (GGPP) synthase is proposed to catalyze the first step in paxilline biosynthesis. Condensation of indole-3-glycerol phosphate with GGPP by paxC then forms 3-geranylgeranylindole (3-GGI), followed by epoxidation and cyclization of this intermediate (by paxM and paxB) to form paspaline. Paspaline is subsequently converted to 13-desoxypaxilline by paxP, the latter being then converted to paxilline by paxQ. Finally paxilline can be mono- and di-prenylated by paxD. The sequence is that of Prenyl transferase paxC from Penicillium paxilli.